The sequence spans 230 residues: Large ribosomal subunit protein uL1 (230 aa).

It belongs to the universal ribosomal protein uL1 family. As to quaternary structure, part of the 50S ribosomal subunit.

Functionally, binds directly to 23S rRNA. The L1 stalk is quite mobile in the ribosome, and is involved in E site tRNA release. Its function is as follows. Protein L1 is also a translational repressor protein, it controls the translation of the L11 operon by binding to its mRNA. This is Large ribosomal subunit protein uL1 from Leptospira interrogans serogroup Icterohaemorrhagiae serovar copenhageni (strain Fiocruz L1-130).